A 347-amino-acid chain; its full sequence is Protein RecA (347 aa).

66–73 contacts ATP; sequence GPESSGKT.

Belongs to the RecA family.

It is found in the cytoplasm. Functionally, can catalyze the hydrolysis of ATP in the presence of single-stranded DNA, the ATP-dependent uptake of single-stranded DNA by duplex DNA, and the ATP-dependent hybridization of homologous single-stranded DNAs. It interacts with LexA causing its activation and leading to its autocatalytic cleavage. This is Protein RecA from Burkholderia cepacia (Pseudomonas cepacia).